The primary structure comprises 424 residues: Inhibin beta A chain (424 aa).

The first 20 residues, 1 to 20 (MPLLWLRGFLLASCWIIVRS), serve as a signal peptide directing secretion. Residues 21-308 (SPTPGSEGPG…EDHPHRRRRR (288 aa)) constitute a propeptide that is removed on maturation. N-linked (GlcNAc...) asparagine glycosylation occurs at asparagine 165. Residues 257–288 (KKKKKEEEGEGKKKDGGDGGAGADEDKEQSHR) are disordered. Residues 261-273 (KEEEGEGKKKDGG) show a composition bias toward basic and acidic residues. 4 cysteine pairs are disulfide-bonded: cysteine 312-cysteine 320, cysteine 319-cysteine 389, cysteine 348-cysteine 421, and cysteine 352-cysteine 423.

This sequence belongs to the TGF-beta family. In terms of assembly, dimeric, linked by one or more disulfide bonds. Inhibin A is a dimer of alpha/INHA and beta-A/INHBA. Activin A is a homodimer of beta-A/INHBA. Activin AB is a dimer of beta-A/INHBA and beta-B/INHBB. Interacts with FST and FSTL3; these interactions prevent activin A interaction to its type II receptor. Activin A interacts with ACVR2A. Activin A interacts with BMPR2. Inhibin A interacts with ACVR1; this interaction creates a non-signaling complex (NSC) that inhibits ACVR1-mediated BMP signaling. Inhibin A interacts with ACVR2A.

The protein resides in the secreted. Inhibins/activins are involved in regulating a number of diverse functions such as hypothalamic and pituitary hormone secretion, gonadal hormone secretion, germ cell development and maturation, erythroid differentiation, insulin secretion, nerve cell survival, embryonic axial development or bone growth, depending on their subunit composition. Functionally, activin A is a homodimer of INHBA that plays a role in several essential biological processes including embryonic development, stem cell maintenance and differentiation, haematopoiesis, cell proliferation and tissue fibrosis. Signals through type I (such as ACVR1B or ACVR1C) and type II receptors (such as ACVR2A, ACVR2B or BMPR2) which, upon ligand binding, phosphorylate SMAD2 and SMAD3 intracellular signaling mediators that form a complex with SMAD4, translocate to the nucleus and modulate gene expression. Can also activate alternative non-canonical intracellular signaling pathways including the p38 MAPK, extracellular signal-regulated kinases 1/2 (ERK1/2) and c-Jun N-terminal kinases (JNKs) to modulate cell migration and differentiation. Alternatively, promotes osteoblastic differentiation via ACVRL1-SMAD1/5/9 pathway. In addition, can engage the type I receptor ACVR1 to form an ACVR1-activin A-type II receptor non-signaling complex (NSC) that renders receptors unavailable for engagement with BMPs, hence resulting in an apparent inhibition of ACVR1-mediated BMP signaling. Its function is as follows. Inhibin A is a dimer of alpha/INHA and beta-A/INHBA that functions as a feedback regulator in the hypothalamic-pituitary-gonadal (HPG) axis. Inhibits the secretion of FSH from the anterior pituitary gland by acting on pituitary gonadotrope cells. Antagonizes activin A by binding to the proteoglycan, betaglycan, and forming a stable complex with and, thereby, sequestering type II activin receptors while excluding type I receptor. The sequence is that of Inhibin beta A chain (INHBA) from Felis catus (Cat).